The chain runs to 284 residues: Bifunctional protein FolD (284 aa).

Residues 166–168 (GAS) and I232 each bind NADP(+).

Belongs to the tetrahydrofolate dehydrogenase/cyclohydrolase family. Homodimer.

The enzyme catalyses (6R)-5,10-methylene-5,6,7,8-tetrahydrofolate + NADP(+) = (6R)-5,10-methenyltetrahydrofolate + NADPH. The catalysed reaction is (6R)-5,10-methenyltetrahydrofolate + H2O = (6R)-10-formyltetrahydrofolate + H(+). Its pathway is one-carbon metabolism; tetrahydrofolate interconversion. Its function is as follows. Catalyzes the oxidation of 5,10-methylenetetrahydrofolate to 5,10-methenyltetrahydrofolate and then the hydrolysis of 5,10-methenyltetrahydrofolate to 10-formyltetrahydrofolate. The protein is Bifunctional protein FolD of Shewanella sp. (strain W3-18-1).